The chain runs to 632 residues: Palmitoyltransferase ZDHHC17 (632 aa).

Topologically, residues 1-304 are cytoplasmic; the sequence is MQREEGFNTK…LKADKEFRQK (304 aa). The tract at residues 11–305 is necessary and sufficient for interaction with DNAJC5 and SNAP25; sequence MADGPDEYET…KADKEFRQKV (295 aa). 7 ANK repeats span residues 51–86, 89–118, 123–152, 156–185, 189–219, 224–253, and 257–286; these read THID…VRQP, ENVT…IVDQ, LNST…DPSL, EGCS…DVDM, NGMT…SVNL, HKNT…NVDA, and KGES…AKGY. The next 2 helical transmembrane spans lie at 305–325 and 326–346; these read VMLG…DLDI and DSWL…QFLS. Residues 347 to 357 are Cytoplasmic-facing; the sequence is KSFFDHSMHSA. Residues 358 to 378 traverse the membrane as a helical segment; it reads LPLGIYLATKFWMYVTWFFWF. The Lumenal portion of the chain corresponds to 379 to 381; that stretch reads WND. Residues 382 to 402 traverse the membrane as a helical segment; sequence LNFLFIHLPFLANSVALFYNF. The Cytoplasmic portion of the chain corresponds to 403 to 480; it reads GKSWKSDPGI…GNCVGAGNHR (78 aa). Residues 437–487 form the DHHC domain; it reads IFCSTCLIRKPVRSKHCGVCNRCIAKFDHHCPWVGNCVGAGNHRYFMGYLF. The active-site S-palmitoyl cysteine intermediate is Cys467. The helical transmembrane segment at 481-501 threads the bilayer; sequence YFMGYLFFLLFMICWMIYGCV. Residues 502–529 are Lumenal-facing; it reads SYWGLHCETTYTKDGFWTYITQIATCSP. Residues 530–550 form a helical membrane-spanning segment; it reads WMFWMFLNSVFHFLWVAVLLM. The Cytoplasmic portion of the chain corresponds to 551 to 632; that stretch reads CQLYQITCLG…QISGSGYQLV (82 aa).

This sequence belongs to the DHHC palmitoyltransferase family. AKR/ZDHHC17 subfamily. As to quaternary structure, interacts (via ANK repeats) with numerous proteins (via the consensus sequence motif [VIAP]-[VIT]-x-x-Q-P). Interacts (via ANK repeats) with CLIP3. Interacts (via ANK repeats) with HTT. Interacts (via ANK repeats) with DNAJC5 (via C-terminus). Interacts (via ANK repeats) with MAP6. Interacts (via ANK repeats) with SNAP23. Interacts (via ANK repeats) with SNAP25. Interacts (via ANK repeats) with EVL. Interacts with SPRED1 and SPRED3. Interacts with GPM6A and OPTN. May interact (via ANK repeats) with SPRED2. May interact with NTRK1; may regulate its localization and function. In terms of processing, autopalmitoylated. Autopalmitoylation has a regulatory role in ZDHHC17-mediated Mg(2+) transport. As to expression, expressed in liver, testis, kidney, heart, pancreas and brain. Highest expression was seen in the brain. Localized predominantly in the perinuclear regions of neurons from the cortex, striatum and hippocampus. Colocalized with HTT in the medium spiny neurons of the striatum and the spiny neurons that project into the globus pallidus.

Its subcellular location is the golgi apparatus membrane. The protein resides in the cytoplasmic vesicle membrane. It localises to the presynaptic cell membrane. It carries out the reaction L-cysteinyl-[protein] + hexadecanoyl-CoA = S-hexadecanoyl-L-cysteinyl-[protein] + CoA. The enzyme catalyses L-cysteinyl-[protein] + tetradecanoyl-CoA = S-tetradecanoyl-L-cysteinyl-[protein] + CoA. It catalyses the reaction L-cysteinyl-[protein] + octadecanoyl-CoA = S-octadecanoyl-L-cysteinyl-[protein] + CoA. Palmitoyltransferase that catalyzes the addition of palmitate onto various protein substrates and is involved in a variety of cellular processes. Has no stringent fatty acid selectivity and in addition to palmitate can also transfer onto target proteins myristate from tetradecanoyl-CoA and stearate from octadecanoyl-CoA. Palmitoyltransferase specific for a subset of neuronal proteins, including SNAP25, DLG4/PSD95, GAD2, SYT1 and HTT. Also palmitoylates neuronal protein GPM6A as well as SPRED1 and SPRED3. Could also play a role in axonogenesis through the regulation of NTRK1 and the downstream ERK1/ERK2 signaling cascade. May be involved in the sorting or targeting of critical proteins involved in the initiating events of endocytosis at the plasma membrane. May play a role in Mg(2+) transport. Could also palmitoylate DNAJC5 and regulate its localization to the Golgi membrane. Palmitoylates CASP6, thereby preventing its dimerization and subsequent activation. The protein is Palmitoyltransferase ZDHHC17 of Mus musculus (Mouse).